A 334-amino-acid polypeptide reads, in one-letter code: Cell division protein ZipA (334 aa).

The Periplasmic portion of the chain corresponds to 1 to 2 (ME). A helical transmembrane segment spans residues 3–23 (LHIIFLILGGLLIVLLAGFSI). The Cytoplasmic portion of the chain corresponds to 24-334 (YSARREKSRI…DRQAYFARVS (311 aa)).

Belongs to the ZipA family. As to quaternary structure, interacts with FtsZ via their C-terminal domains.

The protein resides in the cell inner membrane. Its function is as follows. Essential cell division protein that stabilizes the FtsZ protofilaments by cross-linking them and that serves as a cytoplasmic membrane anchor for the Z ring. Also required for the recruitment to the septal ring of downstream cell division proteins. This chain is Cell division protein ZipA, found in Haemophilus ducreyi (strain 35000HP / ATCC 700724).